Consider the following 408-residue polypeptide: tRNA-specific 2-thiouridylase MnmA (408 aa).

ATP-binding positions include 27–34 and Leu53; that span reads AMSGGVDS. Cys121 serves as the catalytic Nucleophile. Cys121 and Cys222 are oxidised to a cystine. ATP is bound at residue Gly145. Residues 172–174 are interaction with tRNA; sequence RDQ. Cys222 (cysteine persulfide intermediate) is an active-site residue.

Belongs to the MnmA/TRMU family.

Its subcellular location is the cytoplasm. The catalysed reaction is S-sulfanyl-L-cysteinyl-[protein] + uridine(34) in tRNA + AH2 + ATP = 2-thiouridine(34) in tRNA + L-cysteinyl-[protein] + A + AMP + diphosphate + H(+). Catalyzes the 2-thiolation of uridine at the wobble position (U34) of tRNA, leading to the formation of s(2)U34. The protein is tRNA-specific 2-thiouridylase MnmA of Rhizobium etli (strain ATCC 51251 / DSM 11541 / JCM 21823 / NBRC 15573 / CFN 42).